The sequence spans 373 residues: Chorismate synthase (373 aa).

Arg-46 contacts NADP(+). Residues 123 to 125 (RSS), 251 to 252 (NA), Gly-295, 310 to 314 (KPTPS), and Arg-337 each bind FMN.

The protein belongs to the chorismate synthase family. The cofactor is FMNH2.

It carries out the reaction 5-O-(1-carboxyvinyl)-3-phosphoshikimate = chorismate + phosphate. Its pathway is metabolic intermediate biosynthesis; chorismate biosynthesis; chorismate from D-erythrose 4-phosphate and phosphoenolpyruvate: step 7/7. Its function is as follows. Catalyzes the anti-1,4-elimination of the C-3 phosphate and the C-6 proR hydrogen from 5-enolpyruvylshikimate-3-phosphate (EPSP) to yield chorismate, which is the branch point compound that serves as the starting substrate for the three terminal pathways of aromatic amino acid biosynthesis. This reaction introduces a second double bond into the aromatic ring system. The sequence is that of Chorismate synthase from Methanococcus maripaludis (strain DSM 14266 / JCM 13030 / NBRC 101832 / S2 / LL).